Here is a 326-residue protein sequence, read N- to C-terminus: PDZ domain-containing protein MAGIX (326 aa).

A disordered region spans residues 1 to 32 (MDSHAGNTADPRGSRRGVGLQGSGSPRARQLL). The 85-residue stretch at 128-212 (SVELVRGPAG…RLCLVLQRPQ (85 aa)) folds into the PDZ domain. Residues 214–267 (MNGSRSKEVGGGHQKTDRIPDPRGGRMMESRGTISPVHHRPKTRTGPGPSPESV) form a disordered region. Over residues 218 to 242 (RSKEVGGGHQKTDRIPDPRGGRMME) the composition is skewed to basic and acidic residues. At Ser-263 the chain carries Phosphoserine.

The polypeptide is PDZ domain-containing protein MAGIX (Magix) (Rattus norvegicus (Rat)).